The chain runs to 484 residues: Magnesium transporter MRS2-3 (484 aa).

Disordered stretches follow at residues 1 to 40 (MRGA…GRKK) and 141 to 186 (TKPQ…QSLE). Over residues 10–24 (NFSTNPSTPNTGQPT) the composition is skewed to polar residues. Residues 203 to 275 (ACLEAASSSL…LLDDDEDMAE (73 aa)) are a coiled coil. Residues 286–320 (LEDSSNSSMNESDTFEVDLPQGDEDDRLPPEFASE) are disordered. Residues 298–311 (DTFEVDLPQGDEDD) are compositionally biased toward acidic residues. A helical membrane pass occupies residues 416-436 (GVMLTTATLVMSAFIAVAGVF). Residues 437 to 439 (GMN) carry the Required for magnesium transport activity motif. A helical membrane pass occupies residues 455–475 (FIWTVIGGSIGSICLYVGAIG).

The protein belongs to the CorA metal ion transporter (MIT) (TC 1.A.35.5) family. In terms of tissue distribution, expressed in the whole plant.

The protein resides in the membrane. Magnesium transporter that may mediate the influx of magnesium. In Arabidopsis thaliana (Mouse-ear cress), this protein is Magnesium transporter MRS2-3 (MRS2-3).